A 256-amino-acid chain; its full sequence is tRNA pseudouridine synthase A (256 aa).

The active-site Nucleophile is the aspartate 52. Tyrosine 111 serves as a coordination point for substrate.

This sequence belongs to the tRNA pseudouridine synthase TruA family. Homodimer.

It carries out the reaction uridine(38/39/40) in tRNA = pseudouridine(38/39/40) in tRNA. In terms of biological role, formation of pseudouridine at positions 38, 39 and 40 in the anticodon stem and loop of transfer RNAs. The polypeptide is tRNA pseudouridine synthase A (Paramagnetospirillum magneticum (strain ATCC 700264 / AMB-1) (Magnetospirillum magneticum)).